Reading from the N-terminus, the 87-residue chain is Keratin-associated protein 7-1 (87 aa).

The interval 43-84 (GCGCNGYSSLGYSFGGSNINNLGGCYGGSFYRPWGSGSGFGY) is 11 X 2 AA repeats of G-[YCGS].

Belongs to the KRTAP type 7 family. In terms of assembly, interacts with hair keratins. In terms of tissue distribution, expressed in the upper portion of the hair cortex.

Functionally, in the hair cortex, hair keratin intermediate filaments are embedded in an interfilamentous matrix, consisting of hair keratin-associated proteins (KRTAP), which are essential for the formation of a rigid and resistant hair shaft through their extensive disulfide bond cross-linking with abundant cysteine residues of hair keratins. The matrix proteins include the high-sulfur and high-glycine-tyrosine keratins. The sequence is that of Keratin-associated protein 7-1 (KRTAP7-1) from Homo sapiens (Human).